The sequence spans 595 residues: Aspartate--tRNA ligase (595 aa).

Glu180 contacts L-aspartate. The segment at 204 to 207 is aspartate; the sequence is QLFK. Arg226 serves as a coordination point for L-aspartate. ATP is bound by residues 226 to 228 and Gln235; that span reads RDE. Position 454 (His454) interacts with L-aspartate. Residue Glu488 participates in ATP binding. Residue Arg495 participates in L-aspartate binding. 540–543 contacts ATP; it reads GLDR.

The protein belongs to the class-II aminoacyl-tRNA synthetase family. Type 1 subfamily. In terms of assembly, homodimer.

It is found in the cytoplasm. The enzyme catalyses tRNA(Asp) + L-aspartate + ATP = L-aspartyl-tRNA(Asp) + AMP + diphosphate. Catalyzes the attachment of L-aspartate to tRNA(Asp) in a two-step reaction: L-aspartate is first activated by ATP to form Asp-AMP and then transferred to the acceptor end of tRNA(Asp). The protein is Aspartate--tRNA ligase of Clostridium acetobutylicum (strain ATCC 824 / DSM 792 / JCM 1419 / IAM 19013 / LMG 5710 / NBRC 13948 / NRRL B-527 / VKM B-1787 / 2291 / W).